A 614-amino-acid chain; its full sequence is Acetylcholinesterase (614 aa).

The signal sequence occupies residues 1–31; sequence MRPPWYPLHTPSLASPLLFLLLSLLGGGARA. Cys100 and Cys127 form a disulfide bridge. Ser234 serves as the catalytic Acyl-ester intermediate. A disulfide bridge links Cys288 with Cys303. A glycan (N-linked (GlcNAc...) asparagine) is linked at Asn296. Catalysis depends on Glu365, which acts as the Charge relay system. N-linked (GlcNAc...) asparagine glycosylation is present at Asn381. The cysteines at positions 440 and 560 are disulfide-linked. His478 acts as the Charge relay system in catalysis. Residue Asn495 is glycosylated (N-linked (GlcNAc...) asparagine).

It belongs to the type-B carboxylesterase/lipase family. As to quaternary structure, homotetramer; composed of disulfide-linked homodimers. Catalytic forms H (GPI-anchor dimer) and T (asymmetric collagen-tailed), which differ in their C-terminus, account for all types of known ACHE forms. Interacts with PRIMA1. The interaction with PRIMA1 is required to anchor it to the basal lamina of cells and organize into tetramers. As to expression, has been found in central nervous system and muscle. Found in embryonic liver and spleen but not in adult liver.

It localises to the synapse. Its subcellular location is the secreted. It is found in the cell membrane. The enzyme catalyses acetylcholine + H2O = choline + acetate + H(+). Functionally, terminates signal transduction at the neuromuscular junction by rapid hydrolysis of the acetylcholine released into the synaptic cleft. The polypeptide is Acetylcholinesterase (Ache) (Rattus norvegicus (Rat)).